Consider the following 431-residue polypeptide: Venom metalloproteinase 1 (431 aa).

Positions 1–22 (MDLFILTRFILFLSFFMKSIHC) are cleaved as a signal peptide. N-linked (GlcNAc...) asparagine glycosylation is found at N64, N113, N148, and N187. In terms of domain architecture, Peptidase M12B spans 228 to 428 (DLLMKTSRRL…TSAACLKDTY (201 aa)). Intrachain disulfides connect C340–C423 and C379–C407. H363 is a binding site for Zn(2+). E364 is a catalytic residue. Residues H367 and H373 each coordinate Zn(2+). N414 carries an N-linked (GlcNAc...) asparagine glycan.

It in the C-terminal section; belongs to the venom metalloproteinase (M12B) family. In terms of assembly, monomer. It depends on Zn(2+) as a cofactor. In terms of tissue distribution, expressed by the venom gland.

The protein resides in the secreted. Its activity is regulated as follows. The gelatinase activity is inhibited by EDTA. Its function is as follows. The recombinant protein has gelatinase activity. In vivo, injection of this recombinant into fifth instar L.oleracea (host) larvae results in partial insect mortality associated with the molt to sixth instar, with surviving insects showing retarded development and growth. This chain is Venom metalloproteinase 1, found in Eulophus pennicornis (Parasitoid wasp).